Consider the following 888-residue polypeptide: uncharacterized protein (888 aa).

The first 20 residues, Met-1 to Ala-20, serve as a signal peptide directing secretion. The next 6 membrane-spanning stretches (helical) occupy residues Ile-513–Ala-533, Thr-565–Ala-585, Leu-611–Ile-631, Val-649–Met-669, Ile-682–Ile-702, and Leu-781–Val-801.

The protein belongs to the TrbL/VirB6 family.

Its subcellular location is the cell membrane. This is an uncharacterized protein from Rickettsia prowazekii (strain Madrid E).